Consider the following 91-residue polypeptide: Bacterial microcompartment shell protein PduJ (91 aa).

The region spanning 4–88 (ALGLVETKGL…PHSDVEAILP (85 aa)) is the BMC domain.

The protein belongs to the bacterial microcompartments protein family. As to quaternary structure, homohexamer with a central pore. Interacts with PduP, which targets PduP to the BMC. Interacts with shell protein PduA.

Its subcellular location is the bacterial microcompartment. It functions in the pathway polyol metabolism; 1,2-propanediol degradation. In terms of biological role, one of the major shell proteins of the bacterial microcompartment (BMC) dedicated to 1,2-propanediol (1,2-PD) degradation. At least one of PduA or PduJ is required for BMC assembly; it must be encoded as the first gene in the pdu operon. Required for structural integrity of BMCs and to mitigate propionaldehyde toxicity, probably joins facets responsible for BMC closure. Probably the hub for binding multiple enzymes to the interior of the BMC. Functionally, expression of a cosmid containing the full 21-gene pdu operon in E.coli allows E.coli to grow on 1,2-PD with the appearance of BMCs in its cytoplasm. Overexpression of this protein leads to an internal structure with a whorled architecture. The 1,2-PD-specific bacterial microcompartment (BMC) concentrates low levels of 1,2-PD catabolic enzymes, concentrates volatile reaction intermediates thus enhancing pathway flux and keeps the level of toxic, mutagenic propionaldehyde low. This chain is Bacterial microcompartment shell protein PduJ, found in Citrobacter freundii.